The primary structure comprises 624 residues: Ubiquitin-associated and SH3 domain-containing protein A (624 aa).

The region spanning 19–60 is the UBA domain; it reads RSTPSLLDPLLAMGFPTHTALKALAATGRKTAEAAADWLHGH. Positions 238–303 constitute an SH3 domain; that stretch reads VHYQTLKALF…PENYTERANE (66 aa). Residues 358–624 form a phosphatase-like region; the sequence is RRGILVVRHG…FNWRNWISSN (267 aa).

As to quaternary structure, homodimer or homooligomer. Interacts with CBL. Part of a complex containing CBL and activated EGFR. Interacts with ubiquitin and with mono-ubiquitinated proteins. Interacts with dynamin.

The protein localises to the cytoplasm. The protein resides in the nucleus. Functionally, interferes with CBL-mediated down-regulation and degradation of receptor-type tyrosine kinases. Promotes accumulation of activated target receptors, such as T-cell receptors, EGFR and PDGFRB, on the cell surface. May inhibit dynamin-dependent endocytic pathways by functionally sequestering dynamin via its SH3 domain. Exhibits negligible protein tyrosine phosphatase activity at neutral pH. May act as a dominant-negative regulator of UBASH3B-dependent dephosphorylation. The chain is Ubiquitin-associated and SH3 domain-containing protein A (Ubash3a) from Mus musculus (Mouse).